The sequence spans 160 residues: Cytochrome b6-f complex subunit 4 (160 aa).

3 helical membrane passes run 36–56 (LLYT…GLAL), 95–115 (LLGV…PFIE), and 127–147 (PIAT…GIGA).

Belongs to the cytochrome b family. PetD subfamily. In terms of assembly, the 4 large subunits of the cytochrome b6-f complex are cytochrome b6, subunit IV (17 kDa polypeptide, petD), cytochrome f and the Rieske protein, while the 4 small subunits are petG, petL, petM and petN. The complex functions as a dimer.

It is found in the plastid. It localises to the chloroplast thylakoid membrane. Component of the cytochrome b6-f complex, which mediates electron transfer between photosystem II (PSII) and photosystem I (PSI), cyclic electron flow around PSI, and state transitions. The chain is Cytochrome b6-f complex subunit 4 from Cyanidioschyzon merolae (strain NIES-3377 / 10D) (Unicellular red alga).